The sequence spans 123 residues: Large ribosomal subunit protein uL29 (123 aa).

Belongs to the universal ribosomal protein uL29 family.

In Euphorbia esula (Leafy spurge), this protein is Large ribosomal subunit protein uL29 (RPL35).